A 432-amino-acid polypeptide reads, in one-letter code: Short/branched chain specific acyl-CoA dehydrogenase, mitochondrial (432 aa).

A mitochondrion-targeting transit peptide spans 1–33; the sequence is MERATVRLLRGGALLRRNFPSCLSSWKTPPHAL. Lysine 70 carries the post-translational modification N6-acetyllysine; alternate. Lysine 70 is modified (N6-succinyllysine; alternate). Residues 174–183 and 207–209 contribute to the FAD site; these read ICISETGAGS and WIS. Serine 183 contacts substrate. Serine 183 carries the phosphoserine modification. Residues tyrosine 229 and tyrosine 283 each contribute to the substrate site. An N6-acetyllysine; alternate modification is found at lysine 284. Lysine 284 is subject to N6-succinyllysine; alternate. A substrate-binding site is contributed by 291 to 294; it reads NEGR. FAD-binding positions include arginine 319, glutamine 330, and 387 to 391; that span reads EWMGG. Glutamate 414 (proton acceptor) is an active-site residue. 416-418 contacts FAD; that stretch reads TSN. An N6-acetyllysine modification is found at lysine 426.

The protein belongs to the acyl-CoA dehydrogenase family. In terms of assembly, homotetramer. FAD serves as cofactor.

It localises to the mitochondrion matrix. It carries out the reaction 2-methylbutanoyl-CoA + oxidized [electron-transfer flavoprotein] + H(+) = (2E)-2-methylbut-2-enoyl-CoA + reduced [electron-transfer flavoprotein]. The catalysed reaction is (2S)-2-methylbutanoyl-CoA + oxidized [electron-transfer flavoprotein] + H(+) = (2E)-2-methylbut-2-enoyl-CoA + reduced [electron-transfer flavoprotein]. It catalyses the reaction (2R)-2-methylbutanoyl-CoA + oxidized [electron-transfer flavoprotein] + H(+) = ethylacryloyl-CoA + reduced [electron-transfer flavoprotein]. The enzyme catalyses butanoyl-CoA + oxidized [electron-transfer flavoprotein] + H(+) = (2E)-butenoyl-CoA + reduced [electron-transfer flavoprotein]. It carries out the reaction 2-methylpropanoyl-CoA + oxidized [electron-transfer flavoprotein] + H(+) = 2-methylpropenoyl-CoA + reduced [electron-transfer flavoprotein]. The catalysed reaction is hexanoyl-CoA + oxidized [electron-transfer flavoprotein] + H(+) = (2E)-hexenoyl-CoA + reduced [electron-transfer flavoprotein]. It catalyses the reaction valproyl-CoA + oxidized [electron-transfer flavoprotein] + H(+) = (2E)-2-propylpent-2-enoyl-CoA + reduced [electron-transfer flavoprotein]. Its pathway is lipid metabolism; mitochondrial fatty acid beta-oxidation. It functions in the pathway amino-acid degradation; L-isoleucine degradation. Short and branched chain specific acyl-CoA dehydrogenase that catalyzes the removal of one hydrogen from C-2 and C-3 of the fatty acyl-CoA thioester, resulting in the formation of trans-2-enoyl-CoA. Among the different mitochondrial acyl-CoA dehydrogenases, acts specifically on short and branched chain acyl-CoA derivatives such as (S)-2-methylbutyryl-CoA as well as short straight chain acyl-CoAs such as butyryl-CoA. Plays an important role in the metabolism of L-isoleucine by catalyzing the dehydrogenation of 2-methylbutyryl-CoA, one of the steps of the L-isoleucine catabolic pathway. Can also act on valproyl-CoA, a metabolite of the valproic acid drug. The sequence is that of Short/branched chain specific acyl-CoA dehydrogenase, mitochondrial (ACADSB) from Bos taurus (Bovine).